A 306-amino-acid polypeptide reads, in one-letter code: Porphobilinogen deaminase (306 aa).

Cysteine 239 is subject to S-(dipyrrolylmethanemethyl)cysteine.

It belongs to the HMBS family. Monomer. It depends on dipyrromethane as a cofactor.

The catalysed reaction is 4 porphobilinogen + H2O = hydroxymethylbilane + 4 NH4(+). It participates in porphyrin-containing compound metabolism; protoporphyrin-IX biosynthesis; coproporphyrinogen-III from 5-aminolevulinate: step 2/4. Tetrapolymerization of the monopyrrole PBG into the hydroxymethylbilane pre-uroporphyrinogen in several discrete steps. The polypeptide is Porphobilinogen deaminase (Helicobacter pylori (strain Shi470)).